Here is a 125-residue protein sequence, read N- to C-terminus: Protein ApaG (125 aa).

The ApaG domain maps to 1–125 (MINSPRVCIQ…FRLAVPTLIH (125 aa)).

In Citrobacter koseri (strain ATCC BAA-895 / CDC 4225-83 / SGSC4696), this protein is Protein ApaG.